A 208-amino-acid polypeptide reads, in one-letter code: Mediator of RNA polymerase II transcription subunit 18 (208 aa).

This sequence belongs to the Mediator complex subunit 18 family. In terms of assembly, component of the Mediator complex.

The protein resides in the nucleus. Its function is as follows. Component of the Mediator complex, a coactivator involved in the regulated transcription of nearly all RNA polymerase II-dependent genes. Mediator functions as a bridge to convey information from gene-specific regulatory proteins to the basal RNA polymerase II transcription machinery. Mediator is recruited to promoters by direct interactions with regulatory proteins and serves as a scaffold for the assembly of a functional preinitiation complex with RNA polymerase II and the general transcription factors. This chain is Mediator of RNA polymerase II transcription subunit 18 (med18), found in Danio rerio (Zebrafish).